Consider the following 362-residue polypeptide: Chorismate synthase (362 aa).

Residue Arg-46 participates in NADP(+) binding. FMN contacts are provided by residues 122-124 (RSS), 238-239 (NA), Gly-278, 293-297 (KPTPS), and Arg-319.

Belongs to the chorismate synthase family. In terms of assembly, homotetramer. FMNH2 is required as a cofactor.

The enzyme catalyses 5-O-(1-carboxyvinyl)-3-phosphoshikimate = chorismate + phosphate. Its pathway is metabolic intermediate biosynthesis; chorismate biosynthesis; chorismate from D-erythrose 4-phosphate and phosphoenolpyruvate: step 7/7. In terms of biological role, catalyzes the anti-1,4-elimination of the C-3 phosphate and the C-6 proR hydrogen from 5-enolpyruvylshikimate-3-phosphate (EPSP) to yield chorismate, which is the branch point compound that serves as the starting substrate for the three terminal pathways of aromatic amino acid biosynthesis. This reaction introduces a second double bond into the aromatic ring system. The protein is Chorismate synthase of Campylobacter jejuni subsp. jejuni serotype O:2 (strain ATCC 700819 / NCTC 11168).